Here is a 309-residue protein sequence, read N- to C-terminus: Homoserine O-succinyltransferase (309 aa).

Residue Cys-142 is the Acyl-thioester intermediate of the active site. Residues Lys-163 and Ser-192 each contribute to the substrate site. His-235 (proton acceptor) is an active-site residue. Residue Glu-237 is part of the active site. Arg-249 contributes to the substrate binding site.

It belongs to the MetA family. As to quaternary structure, homodimer.

It is found in the cytoplasm. It catalyses the reaction L-homoserine + succinyl-CoA = O-succinyl-L-homoserine + CoA. The protein operates within amino-acid biosynthesis; L-methionine biosynthesis via de novo pathway; O-succinyl-L-homoserine from L-homoserine: step 1/1. Functionally, transfers a succinyl group from succinyl-CoA to L-homoserine, forming succinyl-L-homoserine. This Escherichia coli (strain SE11) protein is Homoserine O-succinyltransferase.